Reading from the N-terminus, the 171-residue chain is UPF0398 protein M28_Spy1394 (171 aa).

This sequence belongs to the UPF0398 family.

This Streptococcus pyogenes serotype M28 (strain MGAS6180) protein is UPF0398 protein M28_Spy1394.